We begin with the raw amino-acid sequence, 121 residues long: Large ribosomal subunit protein bL21c (121 aa).

The protein belongs to the bacterial ribosomal protein bL21 family. As to quaternary structure, part of the 50S ribosomal subunit.

The protein resides in the plastid. The protein localises to the chloroplast. Functionally, this protein binds to 23S rRNA. This chain is Large ribosomal subunit protein bL21c, found in Huperzia lucidula (Shining clubmoss).